A 147-amino-acid polypeptide reads, in one-letter code: MLVIVGGTTTGILFLGPRYLPRYLPILGINGASAMKKSYFLANFLACLGLLAISSSSALLITSSPSLLAASATAPSAMTAIFTSFPLPWGSTTSSLNLFSGRLRSISLRFTATSTLCVKLRGLARALASFTASTIFCLSKAILDIPP.

2 consecutive transmembrane segments (helical) span residues 41 to 61 (LANFLACLGLLAISSSSALLI) and 67 to 87 (LLAASATAPSAMTAIFTSFPL).

Its subcellular location is the cell membrane. This is an uncharacterized protein from Pyrococcus horikoshii (strain ATCC 700860 / DSM 12428 / JCM 9974 / NBRC 100139 / OT-3).